The following is a 139-amino-acid chain: ATP synthase epsilon chain (139 aa).

It belongs to the ATPase epsilon chain family. As to quaternary structure, F-type ATPases have 2 components, CF(1) - the catalytic core - and CF(0) - the membrane proton channel. CF(1) has five subunits: alpha(3), beta(3), gamma(1), delta(1), epsilon(1). CF(0) has three main subunits: a, b and c.

The protein resides in the cell inner membrane. Its function is as follows. Produces ATP from ADP in the presence of a proton gradient across the membrane. The sequence is that of ATP synthase epsilon chain from Pseudomonas entomophila (strain L48).